The chain runs to 96 residues: LCXIXQILTGLFLAMHYTSDIATAFSSVAHICRDVNYGWLIRNMHANGSSFFFICIYLHIGRGLYYGSYLYKETWNVGVILLLLVMMTAFVGYVLP.

The next 3 helical transmembrane spans lie at 1–15, 39–60, and 75–95; these read LCXIXQILTGLFLAM, WLIRNMHANGSSFFFICIYLHI, and WNVGVILLLLVMMTAFVGYVL. 2 residues coordinate heme b: H45 and H59.

It belongs to the cytochrome b family. As to quaternary structure, the cytochrome bc1 complex contains 3 respiratory subunits (MT-CYB, CYC1 and UQCRFS1), 2 core proteins (UQCRC1 and UQCRC2) and probably 6 low-molecular weight proteins. Heme b is required as a cofactor.

The protein localises to the mitochondrion inner membrane. In terms of biological role, component of the ubiquinol-cytochrome c reductase complex (complex III or cytochrome b-c1 complex) that is part of the mitochondrial respiratory chain. The b-c1 complex mediates electron transfer from ubiquinol to cytochrome c. Contributes to the generation of a proton gradient across the mitochondrial membrane that is then used for ATP synthesis. This Geophagus steindachneri (Red hump earth eater) protein is Cytochrome b (mt-cyb).